The primary structure comprises 461 residues: Tubulin gamma-2 chain (461 aa).

142 to 148 lines the GTP pocket; the sequence is AGGTGSG.

The protein belongs to the tubulin family.

It localises to the cytoplasm. The protein localises to the cytoskeleton. It is found in the microtubule organizing center. The protein resides in the centrosome. Functionally, tubulin is the major constituent of microtubules. The gamma chain is found at microtubule organizing centers (MTOC) such as the spindle poles or the centrosome, suggesting that it is involved in the minus-end nucleation of microtubule assembly. The polypeptide is Tubulin gamma-2 chain (Euplotoides octocarinatus (Freshwater ciliate)).